The sequence spans 393 residues: NAD(P)H-quinone oxidoreductase subunit H, chloroplastic (393 aa).

This sequence belongs to the complex I 49 kDa subunit family. As to quaternary structure, NDH is composed of at least 16 different subunits, 5 of which are encoded in the nucleus.

Its subcellular location is the plastid. It localises to the chloroplast thylakoid membrane. The enzyme catalyses a plastoquinone + NADH + (n+1) H(+)(in) = a plastoquinol + NAD(+) + n H(+)(out). It carries out the reaction a plastoquinone + NADPH + (n+1) H(+)(in) = a plastoquinol + NADP(+) + n H(+)(out). NDH shuttles electrons from NAD(P)H:plastoquinone, via FMN and iron-sulfur (Fe-S) centers, to quinones in the photosynthetic chain and possibly in a chloroplast respiratory chain. The immediate electron acceptor for the enzyme in this species is believed to be plastoquinone. Couples the redox reaction to proton translocation, and thus conserves the redox energy in a proton gradient. This is NAD(P)H-quinone oxidoreductase subunit H, chloroplastic from Nicotiana tomentosiformis (Tobacco).